The following is a 636-amino-acid chain: C-terminal binding protein AN (636 aa).

Residues 1–21 form a disordered region; that stretch reads MSKIRSSATMPHRDQPSPASP. NAD(+) contacts are provided by residues serine 91, 147 to 148, 169 to 174, aspartate 193, 231 to 237, 258 to 260, aspartate 284, and 307 to 311; these read WL, VGRSVS, CALTNDT, TGS, and RSADY. A disordered region spans residues 341-489; sequence VSDEEVEESE…PLEVMQESSP (149 aa). Residues 342 to 357 are compositionally biased toward acidic residues; it reads SDEEVEESEASEEEEQ. Residues 369–384 show a composition bias toward polar residues; it reads ESTSRQQGESTLTSTE. Basic and acidic residues predominate over residues 385-395; it reads IVRREASELKE. Positions 398–409 are enriched in polar residues; it reads SPGQQHVSQNTA. Over residues 417–429 the composition is skewed to basic residues; the sequence is SRSGKKAKKRHSQ. Positions 430–445 are enriched in polar residues; sequence QKYMQKTDGSSGLNEE. Residues 470–480 are compositionally biased toward basic and acidic residues; it reads SPEDSRSRKTP.

This sequence belongs to the D-isomer specific 2-hydroxyacid dehydrogenase family. Plant AN subfamily. Homodimer. Interacts with KCBP and SUB (via intra-cellular domain); AN is not required for the correct subcellular localization and recycling of SUB. Binds to SOKs proteins polymers (e.g. SOK1, SOK2, SOK3 and SOK4). Interacts with IPGA1 on microtubule upon mechanical stress to regulate microtubule organization. The cofactor is NAD(+). As to expression, expressed in cotyledons, leaves, roots, stems and floral buds.

Its subcellular location is the cytoplasm. The protein resides in the golgi apparatus. The protein localises to the trans-Golgi network. It localises to the cytoskeleton. Functionally, involved in controlling the equilibrium between tubular and stacked structures in the Golgi complex. Required for cortical microtubules (MTs) arrangement that confers cell shape. Cooperatively with IPGA1, negatively regulates cortical microtubules (CMTs) organization in response to mechanical stress and modulates pavement cells morphogenesis leading to puzzle shape, probably in an AAA1/KTN1-dependent manner. Regulates the width of leaves by controlling the polar elongation of leaf cells. Involved in the regulation of trichome branching. Seems to not be able to regulate gene transcription. Regulates epidermal cell divisions and elongation in a non-cell-autonomous manner (regulated by subepidermal cells), but regulates epidermal cell polarity, shape, trichome branching and elongation in a cell-autonomous manner. Negatively regulates growth in the petiole elongation. Prevents lipid peroxidation as a result of abiotic stress response. Is involved in the SUB-dependent signaling mechanism and may act in a membrane trafficking event around the trans-Golgi network. The chain is C-terminal binding protein AN from Arabidopsis thaliana (Mouse-ear cress).